The following is a 541-amino-acid chain: Eukaryotic translation initiation factor 3 subunit L (541 aa).

Positions 308–516 (TFSDILLYIQ…IHIADTKVSH (209 aa)) constitute a PCI domain.

The protein belongs to the eIF-3 subunit L family. Component of the eukaryotic translation initiation factor 3 (eIF-3) complex. The eIF-3 complex interacts with pix.

The protein localises to the cytoplasm. In terms of biological role, component of the eukaryotic translation initiation factor 3 (eIF-3) complex, which is involved in protein synthesis of a specialized repertoire of mRNAs and, together with other initiation factors, stimulates binding of mRNA and methionyl-tRNAi to the 40S ribosome. The eIF-3 complex specifically targets and initiates translation of a subset of mRNAs involved in cell proliferation. The chain is Eukaryotic translation initiation factor 3 subunit L from Drosophila persimilis (Fruit fly).